Here is a 347-residue protein sequence, read N- to C-terminus: D-alanine--D-alanine ligase (347 aa).

Residues 131–333 (KRVLESAGIA…YPELIERLVD (203 aa)) enclose the ATP-grasp domain. 161-216 (EEKLAYPVFTKPSNMGSSVGISKSENQEELRQALELAFRYDSRVLVEQGVNAREIE) is an ATP binding site. Residues D287, E300, and N302 each contribute to the Mg(2+) site.

Belongs to the D-alanine--D-alanine ligase family. Mg(2+) serves as cofactor. It depends on Mn(2+) as a cofactor.

The protein resides in the cytoplasm. It carries out the reaction 2 D-alanine + ATP = D-alanyl-D-alanine + ADP + phosphate + H(+). It participates in cell wall biogenesis; peptidoglycan biosynthesis. Its function is as follows. Cell wall formation. The protein is D-alanine--D-alanine ligase of Streptococcus pneumoniae (strain CGSP14).